We begin with the raw amino-acid sequence, 119 residues long: Putative membrane protein insertion efficiency factor (119 aa).

The segment at 82-119 (NALRGEKGGESAADVPSGGSVSEPPGPAAETSPNAQGA) is disordered.

This sequence belongs to the UPF0161 family.

The protein localises to the cell membrane. Could be involved in insertion of integral membrane proteins into the membrane. In Streptomyces griseus subsp. griseus (strain JCM 4626 / CBS 651.72 / NBRC 13350 / KCC S-0626 / ISP 5235), this protein is Putative membrane protein insertion efficiency factor.